The primary structure comprises 585 residues: Trehalase (585 aa).

The signal sequence occupies residues 1–32; that stretch reads MAKTTPMAKPSVGLLTLQVLVFCALTGSLASA. Substrate contacts are provided by residues Arg-184 and 191–192; that span reads WD. N-linked (GlcNAc...) asparagine glycosylation is present at Asn-207. Residues Asn-228, 237-239, 302-304, and Gly-336 contribute to the substrate site; these read RSQ and RPE. Catalysis depends on Asp-338, which acts as the Proton donor/acceptor. N-linked (GlcNAc...) asparagine glycosylation occurs at Asn-348. The Proton donor/acceptor role is filled by Glu-535. Glu-550 contributes to the substrate binding site.

This sequence belongs to the glycosyl hydrolase 37 family. As to expression, expressed by the venom gland.

The protein resides in the secreted. It carries out the reaction alpha,alpha-trehalose + H2O = alpha-D-glucose + beta-D-glucose. In Pimpla hypochondriaca (Parasitoid wasp), this protein is Trehalase (tre1).